A 356-amino-acid polypeptide reads, in one-letter code: Probable cytosolic iron-sulfur protein assembly protein 1 (356 aa).

WD repeat units lie at residues 34-73 (GHKR…IRAE), 89-128 (GHDS…DYEC), 134-173 (EHSQ…DWYC), 179-218 (AHSS…ECVE), 244-291 (HFSG…ATLR), and 319-356 (AHGS…RIWT).

The protein belongs to the WD repeat CIA1 family.

Essential component of the cytosolic iron-sulfur (Fe/S) protein assembly machinery. Required for the maturation of extramitochondrial Fe/S proteins. In Malassezia globosa (strain ATCC MYA-4612 / CBS 7966) (Dandruff-associated fungus), this protein is Probable cytosolic iron-sulfur protein assembly protein 1.